The sequence spans 267 residues: Phosphate import ATP-binding protein PstB (267 aa).

One can recognise an ABC transporter domain in the interval 21 to 262; it reads VAARNLDFYY…PSKQQTEDYI (242 aa). 53 to 60 is an ATP binding site; the sequence is GPSGCGKS.

The protein belongs to the ABC transporter superfamily. Phosphate importer (TC 3.A.1.7) family. As to quaternary structure, the complex is composed of two ATP-binding proteins (PstB), two transmembrane proteins (PstC and PstA) and a solute-binding protein (PstS).

It localises to the cell inner membrane. It catalyses the reaction phosphate(out) + ATP + H2O = ADP + 2 phosphate(in) + H(+). In terms of biological role, part of the ABC transporter complex PstSACB involved in phosphate import. Responsible for energy coupling to the transport system. This Xanthomonas euvesicatoria pv. vesicatoria (strain 85-10) (Xanthomonas campestris pv. vesicatoria) protein is Phosphate import ATP-binding protein PstB.